The primary structure comprises 470 residues: Glutamate--tRNA ligase (470 aa).

Residues 9–19 (PSPTGFLHVGG) carry the 'HIGH' region motif. A 'KMSKS' region motif is present at residues 236 to 240 (RLSKR). An ATP-binding site is contributed by Lys239.

The protein belongs to the class-I aminoacyl-tRNA synthetase family. Glutamate--tRNA ligase type 1 subfamily. In terms of assembly, monomer.

Its subcellular location is the cytoplasm. It carries out the reaction tRNA(Glu) + L-glutamate + ATP = L-glutamyl-tRNA(Glu) + AMP + diphosphate. Catalyzes the attachment of glutamate to tRNA(Glu) in a two-step reaction: glutamate is first activated by ATP to form Glu-AMP and then transferred to the acceptor end of tRNA(Glu). The sequence is that of Glutamate--tRNA ligase from Legionella pneumophila (strain Corby).